We begin with the raw amino-acid sequence, 565 residues long: Proline--tRNA ligase (565 aa).

This sequence belongs to the class-II aminoacyl-tRNA synthetase family. ProS type 1 subfamily. Homodimer.

Its subcellular location is the cytoplasm. The enzyme catalyses tRNA(Pro) + L-proline + ATP = L-prolyl-tRNA(Pro) + AMP + diphosphate. Functionally, catalyzes the attachment of proline to tRNA(Pro) in a two-step reaction: proline is first activated by ATP to form Pro-AMP and then transferred to the acceptor end of tRNA(Pro). As ProRS can inadvertently accommodate and process non-cognate amino acids such as alanine and cysteine, to avoid such errors it has two additional distinct editing activities against alanine. One activity is designated as 'pretransfer' editing and involves the tRNA(Pro)-independent hydrolysis of activated Ala-AMP. The other activity is designated 'posttransfer' editing and involves deacylation of mischarged Ala-tRNA(Pro). The misacylated Cys-tRNA(Pro) is not edited by ProRS. This is Proline--tRNA ligase from Francisella tularensis subsp. tularensis (strain WY96-3418).